The primary structure comprises 282 residues: 40S small subunit processome assembly factor 1 (282 aa).

Disordered regions lie at residues 27-98 and 121-143; these read YDLG…SEVP and FHSR…NKTK. Residues 48-59 are compositionally biased toward basic and acidic residues; it reads KRDSETVADRAA. Ser-67 and Ser-75 each carry phosphoserine. Residues 89–98 are compositionally biased toward low complexity; sequence SAPAAPSEVP. Residues 131-143 are compositionally biased toward basic and acidic residues; it reads KSEEDKPAKNKTK. Lys-173 is modified (N6-acetyllysine). Positions 208 to 226 are enriched in basic and acidic residues; that stretch reads EKRTSMEEEKRAAQETDIF. The interval 208–254 is disordered; sequence EKRTSMEEEKRAAQETDIFKRKKRKGRSQEDRRSKKLAPSILSSGRA. Phosphoserine is present on Ser-268.

Part of the small subunit (SSU) processome, composed of more than 70 proteins and the RNA chaperone small nucleolar RNA (snoRNA) U3.

The protein resides in the chromosome. It is found in the nucleus. Its subcellular location is the nucleolus. Functionally, part of the small subunit (SSU) processome, first precursor of the small eukaryotic ribosomal subunit. During the assembly of the SSU processome in the nucleolus, many ribosome biogenesis factors, an RNA chaperone and ribosomal proteins associate with the nascent pre-rRNA and work in concert to generate RNA folding, modifications, rearrangements and cleavage as well as targeted degradation of pre-ribosomal RNA by the RNA exosome. Prevents helicase DHX37 to be recruited before post-A1 state. The sequence is that of 40S small subunit processome assembly factor 1 from Rattus norvegicus (Rat).